A 661-amino-acid polypeptide reads, in one-letter code: MKAVVFAYHDMGCTGIQALLDAGYDIAAIFTHPDNPGENHFFGSVARLAAEQGIPVWAPEDVNHPLWIERIREMKPDVLFSFYYRNLLGDEILNLAPKGAFNLHGSLLPKYRGRAPLNWVLVNGESETGVTLHRMVNRADAGDIVAQQAVAIGADDAALTLHRKLCAAATELLSRALPAILAGTTDERPQDHSQATYVGRRTPEDGRLDWELPAQTLHNLVRAVSDPWPGAFGYAGANKFIVWKSRVRHDLPAAKPGTVLSIAPLIVACQDGALEIVTGQTERGVYMQGAQLAQALGLVSGAVISSKPVVAIKRRTRVLILGVNGFIGNHLTERLLQDDNYEIYGLDIGSDAISRFLDCPRFHFVEGDISIHSEWIEYHIKKCDVVLPLVAIATPIEYTRNPLRVFELDFEENLKIIRDCVKYNKRIIFPSTSEVYGMCTDKNFDEDSSNLVVGPINKQRWIYSVSKQLLDRVIWAYGDKNGLKFTLFRPFNWMGPRLDNLNAARIGSSRAITQLILNLVEGSPIKLIEGGKQKRCFTDISDGIEALFRIIENKDGRCDGQIINIGNPDNEASIKELAEMLLACFERHPLRDRFPPFAGFREVESSDYYGKGYQDVEHRKPSIRNAKRCLNWEPKVEMEETVEHTLDFFLRTVELVDDKNP.

Residues 1 to 304 (MKAVVFAYHD…ALGLVSGAVI (304 aa)) form a formyltransferase ArnAFT region. H104 acts as the Proton donor; for formyltransferase activity in catalysis. Residues R114 and 136–140 (VNRAD) contribute to the (6R)-10-formyltetrahydrofolate site. Residues 314-661 (RRTRVLILGV…TVELVDDKNP (348 aa)) form a dehydrogenase ArnADH region. Residues D347 and 368–369 (DI) contribute to the NAD(+) site. Residues A393, Y398, and 432–433 (TS) each bind UDP-alpha-D-glucuronate. The Proton acceptor; for decarboxylase activity role is filled by E434. Residues R460, N492, 526-535 (KLIEGGKQKR), and Y613 contribute to the UDP-alpha-D-glucuronate site. Residue R619 is the Proton donor; for decarboxylase activity of the active site.

The protein in the N-terminal section; belongs to the Fmt family. UDP-L-Ara4N formyltransferase subfamily. It in the C-terminal section; belongs to the NAD(P)-dependent epimerase/dehydratase family. UDP-glucuronic acid decarboxylase subfamily. Homohexamer, formed by a dimer of trimers.

The enzyme catalyses UDP-alpha-D-glucuronate + NAD(+) = UDP-beta-L-threo-pentopyranos-4-ulose + CO2 + NADH. It catalyses the reaction UDP-4-amino-4-deoxy-beta-L-arabinose + (6R)-10-formyltetrahydrofolate = UDP-4-deoxy-4-formamido-beta-L-arabinose + (6S)-5,6,7,8-tetrahydrofolate + H(+). The protein operates within nucleotide-sugar biosynthesis; UDP-4-deoxy-4-formamido-beta-L-arabinose biosynthesis; UDP-4-deoxy-4-formamido-beta-L-arabinose from UDP-alpha-D-glucuronate: step 1/3. It participates in nucleotide-sugar biosynthesis; UDP-4-deoxy-4-formamido-beta-L-arabinose biosynthesis; UDP-4-deoxy-4-formamido-beta-L-arabinose from UDP-alpha-D-glucuronate: step 3/3. It functions in the pathway bacterial outer membrane biogenesis; lipopolysaccharide biosynthesis. In terms of biological role, bifunctional enzyme that catalyzes the oxidative decarboxylation of UDP-glucuronic acid (UDP-GlcUA) to UDP-4-keto-arabinose (UDP-Ara4O) and the addition of a formyl group to UDP-4-amino-4-deoxy-L-arabinose (UDP-L-Ara4N) to form UDP-L-4-formamido-arabinose (UDP-L-Ara4FN). The modified arabinose is attached to lipid A and is required for resistance to polymyxin and cationic antimicrobial peptides. In Klebsiella pneumoniae subsp. pneumoniae (strain ATCC 700721 / MGH 78578), this protein is Bifunctional polymyxin resistance protein ArnA.